Consider the following 351-residue polypeptide: Biotin synthase (351 aa).

The 228-residue stretch at 58-285 folds into the Radical SAM core domain; it reads NTVQLSTLLS…RAMVRLSAGR (228 aa). The [4Fe-4S] cluster site is built by Cys-73, Cys-77, and Cys-80. [2Fe-2S] cluster is bound by residues Cys-117, Cys-148, Cys-208, and Arg-280.

Belongs to the radical SAM superfamily. Biotin synthase family. As to quaternary structure, homodimer. The cofactor is [4Fe-4S] cluster. It depends on [2Fe-2S] cluster as a cofactor.

The enzyme catalyses (4R,5S)-dethiobiotin + (sulfur carrier)-SH + 2 reduced [2Fe-2S]-[ferredoxin] + 2 S-adenosyl-L-methionine = (sulfur carrier)-H + biotin + 2 5'-deoxyadenosine + 2 L-methionine + 2 oxidized [2Fe-2S]-[ferredoxin]. It functions in the pathway cofactor biosynthesis; biotin biosynthesis; biotin from 7,8-diaminononanoate: step 2/2. Catalyzes the conversion of dethiobiotin (DTB) to biotin by the insertion of a sulfur atom into dethiobiotin via a radical-based mechanism. The chain is Biotin synthase from Paraburkholderia phymatum (strain DSM 17167 / CIP 108236 / LMG 21445 / STM815) (Burkholderia phymatum).